The following is a 329-amino-acid chain: Transmembrane protein I329L (329 aa).

The N-terminal stretch at 1 to 31 (MLRVFIFFVFLGSGLAGRIKPQITCKYFISE) is a signal peptide. Asn-32, Asn-39, Asn-44, Asn-76, Asn-82, and Asn-101 each carry an N-linked (GlcNAc...) asparagine; by host glycan. The Extracellular segment spans residues 32-239 (NNTWYKYNVT…NTERYKNCYP (208 aa)). An LRR repeat occupies 112–133 (ELKFLDLRYNNLQFIDYNILRK). N-linked (GlcNAc...) asparagine; by host glycans are attached at residues Asn-185 and Asn-219. The cysteines at positions 195 and 237 are disulfide-linked. A helical membrane pass occupies residues 240–260 (FVLVSILCSCISFLFLIICLL). Topologically, residues 261-329 (RSICKKYSCT…EKKASCSRRK (69 aa)) are cytoplasmic.

It belongs to the asfivirus I329L family. Post-translationally, highly glycosylated.

The protein localises to the host endoplasmic reticulum membrane. It localises to the host Golgi apparatus membrane. In terms of biological role, viral TLR3 homolog that probably prevents TLR3 dimerization and subsequent induction of IFN. Inhibits dsRNA-stimulated activation of NF-kB and IRF3. The protein is Transmembrane protein I329L of Ornithodoros (relapsing fever ticks).